The primary structure comprises 89 residues: Small ribosomal subunit protein uS14A (89 aa).

The protein belongs to the universal ribosomal protein uS14 family. As to quaternary structure, part of the 30S ribosomal subunit. Contacts proteins S3 and S10.

Binds 16S rRNA, required for the assembly of 30S particles and may also be responsible for determining the conformation of the 16S rRNA at the A site. This is Small ribosomal subunit protein uS14A from Lactiplantibacillus plantarum (strain ATCC BAA-793 / NCIMB 8826 / WCFS1) (Lactobacillus plantarum).